A 390-amino-acid polypeptide reads, in one-letter code: MQAVGIITEYNPFHNGHIYHIQQAKKLTGADVVVAVMSGNFVQRGEPALFDKWQRTQMALENGVDLVIELPTFFAVQPSHIFADGAIQLLSALGVDNIVFGSEHPEVDFLSIAKQAPTIAEGQEFKNHTQTFASAYAKQLEAETSFKLEEPNDILALGYASAILNQQANIGIIPIQRAEANYHDANFTDEQSIASASSIRLALHKGKTEKIKNVVPEATKVALDTAANTIDFESKFWSMLKYRLTTDTVGQLGQIYQMAEGLEHRFAKTALNDSGPQSYQSFIKSTKSKRYTFTRIQRTLLYTLLNIKVDQMQAAMQDPYLRILGFTSTGQQYLNEIKKQVTLPLISKVDSSLAKSNLRLDYKAGKVWQLLANEGAPTQDVTRMPLYWEK.

ATP is bound by residues 7-20, Gly-101, Asn-152, and Arg-177; that span reads ITEYNPFHNGHIYH.

Belongs to the TmcAL family.

The protein resides in the cytoplasm. The enzyme catalyses cytidine(34) in elongator tRNA(Met) + acetate + ATP = N(4)-acetylcytidine(34) in elongator tRNA(Met) + AMP + diphosphate. Its function is as follows. Catalyzes the formation of N(4)-acetylcytidine (ac(4)C) at the wobble position of elongator tRNA(Met), using acetate and ATP as substrates. First activates an acetate ion to form acetyladenylate (Ac-AMP) and then transfers the acetyl group to tRNA to form ac(4)C34. This Leuconostoc mesenteroides subsp. mesenteroides (strain ATCC 8293 / DSM 20343 / BCRC 11652 / CCM 1803 / JCM 6124 / NCDO 523 / NBRC 100496 / NCIMB 8023 / NCTC 12954 / NRRL B-1118 / 37Y) protein is tRNA(Met) cytidine acetate ligase.